We begin with the raw amino-acid sequence, 140 residues long: Ribonuclease P protein component (140 aa).

It belongs to the RnpA family. In terms of assembly, consists of a catalytic RNA component (M1 or rnpB) and a protein subunit.

It carries out the reaction Endonucleolytic cleavage of RNA, removing 5'-extranucleotides from tRNA precursor.. RNaseP catalyzes the removal of the 5'-leader sequence from pre-tRNA to produce the mature 5'-terminus. It can also cleave other RNA substrates such as 4.5S RNA. The protein component plays an auxiliary but essential role in vivo by binding to the 5'-leader sequence and broadening the substrate specificity of the ribozyme. The protein is Ribonuclease P protein component of Ralstonia pickettii (strain 12J).